The sequence spans 542 residues: NAD-dependent deacetylase sir2D (542 aa).

2 disordered regions span residues 1–37 and 136–160; these read MNKR…NTPL and ETST…TTTT. Positions 8 to 25 are enriched in low complexity; that stretch reads NNELNEIQNNQNKNNNNK. Residues 165 to 193 adopt a coiled-coil conformation; sequence NETILLDILNNNKDEVDDEIQRIGNNVGN. The region spanning 283–542 is the Deacetylase sirtuin-type domain; sequence ATLDLSTFEK…VQDLLNKVKW (260 aa). Histidine 411 functions as the Proton acceptor in the catalytic mechanism. 4 residues coordinate Zn(2+): cysteine 419, cysteine 422, cysteine 443, and cysteine 446.

This sequence belongs to the sirtuin family. The cofactor is Zn(2+).

It catalyses the reaction N(6)-acetyl-L-lysyl-[protein] + NAD(+) + H2O = 2''-O-acetyl-ADP-D-ribose + nicotinamide + L-lysyl-[protein]. Functionally, NAD-dependent deacetylase, which plays an important role in the regulation of transcriptional repression. The chain is NAD-dependent deacetylase sir2D (sir2D) from Dictyostelium discoideum (Social amoeba).